The primary structure comprises 249 residues: 4-hydroxy-tetrahydrodipicolinate reductase (249 aa).

NAD(+) is bound by residues Asp32, 74 to 76 (GTT), and 99 to 102 (SANY). Residue His134 is the Proton donor/acceptor of the active site. Position 135 (His135) interacts with (S)-2,3,4,5-tetrahydrodipicolinate. Lys138 functions as the Proton donor in the catalytic mechanism. 144-145 (GT) is a binding site for (S)-2,3,4,5-tetrahydrodipicolinate.

This sequence belongs to the DapB family.

The protein resides in the cytoplasm. It carries out the reaction (S)-2,3,4,5-tetrahydrodipicolinate + NAD(+) + H2O = (2S,4S)-4-hydroxy-2,3,4,5-tetrahydrodipicolinate + NADH + H(+). The enzyme catalyses (S)-2,3,4,5-tetrahydrodipicolinate + NADP(+) + H2O = (2S,4S)-4-hydroxy-2,3,4,5-tetrahydrodipicolinate + NADPH + H(+). It participates in amino-acid biosynthesis; L-lysine biosynthesis via DAP pathway; (S)-tetrahydrodipicolinate from L-aspartate: step 4/4. Functionally, catalyzes the conversion of 4-hydroxy-tetrahydrodipicolinate (HTPA) to tetrahydrodipicolinate. In Chlorobaculum tepidum (strain ATCC 49652 / DSM 12025 / NBRC 103806 / TLS) (Chlorobium tepidum), this protein is 4-hydroxy-tetrahydrodipicolinate reductase.